The primary structure comprises 469 residues: MPRLSRRQLLKTAAISTALSTVPAPLLAASREKLVVPPLIEVRRGRPIVLTMQETNYPLDGSHNVTVWGFNGNYLGPTIKIKSGSFAKLNYHNNLPQSVALSIQGLQASGELFGGAARVLKKGESWAPIVPIEQPAASCWYRSATLANSAYQTYRGLAGMWLIEDEQSLKANLPNKYGVDDIPLILQDMEFNNDGLQLFKQNQPHFVGNRLLVNGIEAPYLDVARGWIRLRLLNASLARAYDLRLDNDQEMLLIAQDLSFLPKAKSVKSLVLSPGERAEILVNMNEIDNVSLISGSKRSLYEKIKNMLFSGDELANNTVLELRAQGQLSAFNKQPNLTFETDAPAILQQAVAQTREFNIDVTNGLINQRRFDPRKVDVMARKGTIERWILNASLPVGFTIQGAKFVVESQGEHQLQAEELAWKDTVWVKNKTQILVKFDQASSGNFPFLFGVSNLMLEDMGCLGVLMVQ.

A signal peptide (tat-type signal) is located at residues 1 to 29; the sequence is MPRLSRRQLLKTAAISTALSTVPAPLLAA. The Plastocyanin-like domain maps to 228–286; that stretch reads IRLRLLNASLARAYDLRLDNDQEMLLIAQDLSFLPKAKSVKSLVLSPGERAEILVNMNE.

The protein belongs to the FtsP family. In terms of processing, predicted to be exported by the Tat system. The position of the signal peptide cleavage has not been experimentally proven.

The protein resides in the periplasm. In terms of biological role, cell division protein that is required for growth during stress conditions. May be involved in protecting or stabilizing the divisomal assembly under conditions of stress. The chain is Cell division protein FtsP from Haemophilus influenzae (strain 86-028NP).